An 835-amino-acid chain; its full sequence is MKVTEMQKNWLICCLLIGLIKIIGSELWVTVYYGVPVWRDAETVLFCASDAKAHSTEAHNIWATQACVPTDPNPQEVLIPNVTERFDMWKNNMVDQMQEDIISLWEQSLKPCVKLTPLCVTLSCSSWRSVNNSVNQTNHVQMQNCSFNVTTELRDKKKQVYSLFYMGDIIPLDTNNSSGNNSQYRLINCNTTAVTQACPKISFEPIPIYYCAPPGFAIIKCNDQDFNGTGECNNVSTVQCTHGIKPVISTQLILNGSLATSNIVIRNNSKDTLLVQLNESIPINCTRPGNKTRGQVQIGPGMTFYNIENIIGDTRQAYCEVNRTWEQIWNTTKQIIINNRKNITFIPNPGGDLEVTNLMINCGGEFFYCNTSQLFTNQNGNTTGNITLQCRIRQIVNLWTRVGKGIYAPPIKGPINCLSNITGIILDYTKSGTEKYTIYPTGGDMTNLWRQELYKYKVVSIEPIGVAPGKAKRHTVTRQKRAAFGLGALFLGFLGAAGSTMGAASITLTVQARKLLSGIVQQQNNLLRAIEAQQHLLQLSVWGIKQLQARVLAIERYLRDQQILGLWGCSGKSVCYTNVPWNTTWSNNNSYDTIWGNMTWQNWDEQVRNYSGVIFGLLEQAQEQQSINEKSLLELDQWSSLWNWFDITKWLWYIKIFIMVVAGIVGIRIISIIMSMVARVRQGYSPLSLQTLIPTTRGPDRPERTEEDAGELDNGRSVRLVSGFLALAWEDFRNLLLFLYHRLTDCLSILRRTLELLRQNIHKGLQLLNELRIYLWGIIAYWGRELKISAINLLDTTAVAVAEGTDRIIELVQRIGRGILHIPRRIRQGLERALL.

Residues 1 to 25 (MKVTEMQKNWLICCLLIGLIKIIGS) form the signal peptide. Over 26–656 (ELWVTVYYGV…ITKWLWYIKI (631 aa)) the chain is Extracellular. A disulfide bridge links Cys47 with Cys67. Residues Asn81, Asn131, Asn135, Asn144, Asn148, Asn175, Asn176, Asn180, Asn190, Asn227, Asn234, Asn255, Asn267, Asn278, Asn284, Asn290, Asn322, Asn330, and Asn342 are each glycosylated (N-linked (GlcNAc...) asparagine; by host). Disulfide bonds link Cys112–Cys198, Cys119–Cys189, Cys124–Cys145, Cys211–Cys240, and Cys221–Cys232. The V1 stretch occupies residues 124 to 144 (CSSWRSVNNSVNQTNHVQMQN). Residues 145–189 (CSFNVTTELRDKKKQVYSLFYMGDIIPLDTNNSSGNNSQYRLINC) are V2. The tract at residues 285-318 (CTRPGNKTRGQVQIGPGMTFYNIENIIGDTRQAY) is V3. A disulfide bridge connects residues Cys285 and Cys319. The tract at residues 348–358 (NPGGDLEVTNL) is CD4-binding loop. 2 cysteine pairs are disulfide-bonded: Cys362/Cys417 and Cys369/Cys390. The V4 stretch occupies residues 369–390 (CNTSQLFTNQNGNTTGNITLQC). 4 N-linked (GlcNAc...) asparagine; by host glycosylation sites follow: Asn370, Asn381, Asn385, and Asn420. Residues 433 to 441 (TEKYTIYPT) are V5. A fusion peptide region spans residues 482–503 (AAFGLGALFLGFLGAAGSTMGA). The interval 545-563 (KQLQARVLAIERYLRDQQI) is immunosuppression. A disulfide bond links Cys569 and Cys575. Residues Asn582, Asn588, Asn597, and Asn609 are each glycosylated (N-linked (GlcNAc...) asparagine; by host). Residues 605-639 (EQVRNYSGVIFGLLEQAQEQQSINEKSLLELDQWS) are a coiled coil. Positions 634–655 (ELDQWSSLWNWFDITKWLWYIK) are MPER; binding to GalCer. Residues 657–677 (FIMVVAGIVGIRIISIIMSMV) traverse the membrane as a helical segment. Over 678 to 835 (ARVRQGYSPL…IRQGLERALL (158 aa)) the chain is Cytoplasmic. The short motif at 684-687 (YSPL) is the YXXL motif; contains endocytosis signal element. Positions 834–835 (LL) match the Di-leucine internalization motif motif.

The protein belongs to the HIV-1 env protein family. As to quaternary structure, the mature envelope protein (Env) consists of a homotrimer of non-covalently associated gp120-gp41 heterodimers. The resulting complex protrudes from the virus surface as a spike. There seems to be as few as 10 spikes on the average virion. Interacts with host CD4, CCR5 and CXCR4. Gp120 also interacts with the C-type lectins CD209/DC-SIGN and CLEC4M/DC-SIGNR (collectively referred to as DC-SIGN(R)). Gp120 and gp41 interact with GalCer. Gp120 interacts with host ITGA4/ITGB7 complex; on CD4+ T-cells, this interaction results in rapid activation of integrin ITGAL/LFA-1, which facilitates efficient cell-to-cell spreading of HIV-1. Gp120 interacts with cell-associated heparan sulfate; this interaction increases virus infectivity on permissive cells and may be involved in infection of CD4- cells. In terms of assembly, the mature envelope protein (Env) consists of a homotrimer of non-covalently associated gp120-gp41 heterodimers. The resulting complex protrudes from the virus surface as a spike. There seems to be as few as 10 spikes on the average virion. In terms of processing, highly glycosylated by host. The high number of glycan on the protein is reffered to as 'glycan shield' because it contributes to hide protein sequence from adaptive immune system. Post-translationally, palmitoylation of the transmembrane protein and of Env polyprotein (prior to its proteolytic cleavage) is essential for their association with host cell membrane lipid rafts. Palmitoylation is therefore required for envelope trafficking to classical lipid rafts, but not for viral replication. Specific enzymatic cleavages in vivo yield mature proteins. Envelope glycoproteins are synthesized as an inactive precursor that is heavily N-glycosylated and processed likely by host cell furin in the Golgi to yield the mature SU and TM proteins. The cleavage site between SU and TM requires the minimal sequence [KR]-X-[KR]-R. About 2 of the 9 disulfide bonds of gp41 are reduced by P4HB/PDI, following binding to CD4 receptor.

The protein resides in the virion membrane. Its subcellular location is the host cell membrane. The protein localises to the host endosome membrane. Functionally, attaches the virus to the host lymphoid cell by binding to the primary receptor CD4. This interaction induces a structural rearrangement creating a high affinity binding site for a chemokine coreceptor like CXCR4 and/or CCR5. Acts as a ligand for CD209/DC-SIGN and CLEC4M/DC-SIGNR, which are respectively found on dendritic cells (DCs), and on endothelial cells of liver sinusoids and lymph node sinuses. These interactions allow capture of viral particles at mucosal surfaces by these cells and subsequent transmission to permissive cells. HIV subverts the migration properties of dendritic cells to gain access to CD4+ T-cells in lymph nodes. Virus transmission to permissive T-cells occurs either in trans (without DCs infection, through viral capture and transmission), or in cis (following DCs productive infection, through the usual CD4-gp120 interaction), thereby inducing a robust infection. In trans infection, bound virions remain infectious over days and it is proposed that they are not degraded, but protected in non-lysosomal acidic organelles within the DCs close to the cell membrane thus contributing to the viral infectious potential during DCs' migration from the periphery to the lymphoid tissues. On arrival at lymphoid tissues, intact virions recycle back to DCs' cell surface allowing virus transmission to CD4+ T-cells. Its function is as follows. Acts as a class I viral fusion protein. Under the current model, the protein has at least 3 conformational states: pre-fusion native state, pre-hairpin intermediate state, and post-fusion hairpin state. During fusion of viral and target intracellular membranes, the coiled coil regions (heptad repeats) assume a trimer-of-hairpins structure, positioning the fusion peptide in close proximity to the C-terminal region of the ectodomain. The formation of this structure appears to drive apposition and subsequent fusion of viral and target cell membranes. Complete fusion occurs in host cell endosomes and is dynamin-dependent, however some lipid transfer might occur at the plasma membrane. The virus undergoes clathrin-dependent internalization long before endosomal fusion, thus minimizing the surface exposure of conserved viral epitopes during fusion and reducing the efficacy of inhibitors targeting these epitopes. Membranes fusion leads to delivery of the nucleocapsid into the cytoplasm. Oligomerizes in the host endoplasmic reticulum into predominantly trimers. In a second time, gp160 transits in the host Golgi, where glycosylation is completed. The precursor is then proteolytically cleaved in the trans-Golgi and thereby activated by cellular furin or furin-like proteases to produce gp120 and gp41. This is Envelope glycoprotein gp160 from Pan troglodytes (Chimpanzee).